We begin with the raw amino-acid sequence, 351 residues long: SKP1-like protein 21 (351 aa).

The interaction with the F-box domain of F-box proteins stretch occupies residues 108 to 167; it reads TSAADSLQLKPLVDLTSRALARIIEGKTPEEIREIFHLPDDLTEEEKLEPLKNTMDDPRI. Disordered stretches follow at residues 216–240 and 330–351; these read VKTS…NGTC and VNFS…AGHK. Over residues 217-230 the composition is skewed to basic residues; the sequence is KTSKSKKKNKKRKE. Residues 330-342 show a composition bias toward polar residues; it reads VNFSINGNGTSRR.

The protein belongs to the SKP1 family. Part of a SCF (SKP1-cullin-F-box) protein ligase complex. As to expression, expressed in young seedlings, roots, leaves, floral stems, inflorescences, and siliques.

It localises to the nucleus. It functions in the pathway protein modification; protein ubiquitination. Involved in ubiquitination and subsequent proteasomal degradation of target proteins. Together with CUL1, RBX1 and a F-box protein, it forms a SCF E3 ubiquitin ligase complex. The functional specificity of this complex depends on the type of F-box protein. In the SCF complex, it serves as an adapter that links the F-box protein to CUL1. The protein is SKP1-like protein 21 (ASK21) of Arabidopsis thaliana (Mouse-ear cress).